A 419-amino-acid chain; its full sequence is N-acylneuraminate cytidylyltransferase (419 aa).

It belongs to the CMP-NeuNAc synthase family. In terms of assembly, monomer. May form aggregates. Mg(2+) is required as a cofactor. Mn(2+) serves as cofactor.

It localises to the cytoplasm. It carries out the reaction an N-acylneuraminate + CTP = a CMP-N-acyl-beta-neuraminate + diphosphate. With respect to regulation, inhibited by the CTP analogs 5-mercuri-CTP and CTP-2',3'-dialdehyde. Functionally, catalyzes the formation of CMP-N-acetylneuraminic acid (CMP-NeuNAc), which is essential for the formation of the capsule. This is N-acylneuraminate cytidylyltransferase (neuA) from Escherichia coli O18:K1:H7 (strain RS218 / NMEC).